We begin with the raw amino-acid sequence, 296 residues long: Morphine 6-dehydrogenase (296 aa).

13 to 22 (GVKMPALGLG) contacts NADP(+). Y52 serves as the catalytic Proton donor. H110 provides a ligand contact to substrate.

It belongs to the aldo/keto reductase family. As to quaternary structure, monomer.

The enzyme catalyses morphine + NAD(+) = morphinone + NADH + H(+). It carries out the reaction morphine + NADP(+) = morphinone + NADPH + H(+). Its pathway is alkaloid degradation; codeine degradation. It participates in alkaloid degradation; morphine degradation. Oxidizes only the C-6 hydroxy group of morphine and codeine. In Pseudomonas putida (Arthrobacter siderocapsulatus), this protein is Morphine 6-dehydrogenase (morA).